Consider the following 72-residue polypeptide: DNA-directed RNA polymerase subunit omega (72 aa).

Belongs to the RNA polymerase subunit omega family. The RNAP catalytic core consists of 2 alpha, 1 beta, 1 beta' and 1 omega subunit. When a sigma factor is associated with the core the holoenzyme is formed, which can initiate transcription.

It carries out the reaction RNA(n) + a ribonucleoside 5'-triphosphate = RNA(n+1) + diphosphate. Its function is as follows. Promotes RNA polymerase assembly. Latches the N- and C-terminal regions of the beta' subunit thereby facilitating its interaction with the beta and alpha subunits. In Campylobacter lari (strain RM2100 / D67 / ATCC BAA-1060), this protein is DNA-directed RNA polymerase subunit omega.